Reading from the N-terminus, the 765-residue chain is Protein O-mannosyl-transferase 2 (765 aa).

Residues 1–31 (MAASVVKTPKCPRRGSVKDVAQNAPRTAPTS) are disordered. The helical transmembrane segment at 35-55 (ANWNWWLLLATVFLVTFATRF) threads the bilayer. 3 N-linked (GlcNAc...) asparagine glycosylation sites follow: asparagine 80, asparagine 106, and asparagine 119. The next 5 membrane-spanning stretches (helical) occupy residues 128-148 (YFCT…VYDL), 175-195 (ILLD…MVKV), 206-226 (GLRW…TISV), 228-248 (FVGL…LWLI), and 268-288 (ITLI…HLSV). N-linked (GlcNAc...) asparagine glycosylation is found at asparagine 290 and asparagine 314. 3 consecutive MIR domains span residues 318–374 (PRDV…IRPH), 384–440 (VQIL…VLIV), and 445–501 (NETV…VEDN). A glycan (N-linked (GlcNAc...) asparagine) is linked at asparagine 445. The next 4 membrane-spanning stretches (helical) occupy residues 566–586 (IYLL…ALFV), 667–687 (LFLG…VLYF), 689–709 (HYFP…NYIL), and 719–739 (VILG…SPLA). A glycan (N-linked (GlcNAc...) asparagine) is linked at asparagine 751.

This sequence belongs to the glycosyltransferase 39 family. As to quaternary structure, interacts with Rt/POMT1. At the cellular blastoderm stage, expression accumulates in the ventrally located mesoderm primordium. At germ band extension, mesoderm expression is seen as stripes of strong expression. A very strong signal is also detected in the invaginating gut. As the germ band retracts, mesodermal expression decays and becomes restricted to somatic muscle precursors.

The protein resides in the endoplasmic reticulum membrane. It carries out the reaction a di-trans,poly-cis-dolichyl beta-D-mannosyl phosphate + L-seryl-[protein] = 3-O-(alpha-D-mannosyl)-L-seryl-[protein] + a di-trans,poly-cis-dolichyl phosphate + H(+). The enzyme catalyses a di-trans,poly-cis-dolichyl beta-D-mannosyl phosphate + L-threonyl-[protein] = 3-O-(alpha-D-mannosyl)-L-threonyl-[protein] + a di-trans,poly-cis-dolichyl phosphate + H(+). It functions in the pathway protein modification; protein glycosylation. In terms of biological role, rt/POMT1 and tw/POMT2 function as a protein O-mannosyltransferase in association with each other to generate and maintain normal muscle development. The polypeptide is Protein O-mannosyl-transferase 2 (tw) (Drosophila melanogaster (Fruit fly)).